Here is a 291-residue protein sequence, read N- to C-terminus: Ribose-phosphate pyrophosphokinase (291 aa).

ATP-binding positions include 34–36 (DGE) and 92–93 (RQ). Mg(2+)-binding residues include histidine 125 and aspartate 165. Residue lysine 188 is part of the active site. Residues arginine 190 and aspartate 214 each coordinate D-ribose 5-phosphate.

This sequence belongs to the ribose-phosphate pyrophosphokinase family. Class III (archaeal) subfamily. Mg(2+) serves as cofactor.

The protein localises to the cytoplasm. It carries out the reaction D-ribose 5-phosphate + ATP = 5-phospho-alpha-D-ribose 1-diphosphate + AMP + H(+). Its pathway is metabolic intermediate biosynthesis; 5-phospho-alpha-D-ribose 1-diphosphate biosynthesis; 5-phospho-alpha-D-ribose 1-diphosphate from D-ribose 5-phosphate (route I): step 1/1. Functionally, involved in the biosynthesis of the central metabolite phospho-alpha-D-ribosyl-1-pyrophosphate (PRPP) via the transfer of pyrophosphoryl group from ATP to 1-hydroxyl of ribose-5-phosphate (Rib-5-P). This is Ribose-phosphate pyrophosphokinase from Methanopyrus kandleri (strain AV19 / DSM 6324 / JCM 9639 / NBRC 100938).